A 524-amino-acid chain; its full sequence is Solute carrier family 2, facilitated glucose transporter member 2 (524 aa).

Residues 1 to 6 are Cytoplasmic-facing; that stretch reads MTEDKI. A helical transmembrane segment spans residues 7-26; the sequence is TGTLVFAVLTAVLGSFQFGY. Residues 27-89 are Extracellular-facing; that stretch reads DIGVINAPQQ…SWAEEETTAS (63 aa). N62 carries N-linked (GlcNAc...) asparagine glycosylation. The helical transmembrane segment at 90 to 115 threads the bilayer; that stretch reads ASLIIMLWSLSVSIFAIGGMIASFFG. At 116–126 the chain is on the cytoplasmic side; that stretch reads GMLGDRLGRIK. Residues 127 to 145 form a helical membrane-spanning segment; that stretch reads AMLVANILSLVGALLMWFS. Topologically, residues 146 to 150 are extracellular; that stretch reads KLGPS. The chain crosses the membrane as a helical span at residues 151 to 176; that stretch reads HILIISGRGISGLYCGLISGLVPMYI. The Cytoplasmic portion of the chain corresponds to 177–187; that stretch reads GEIAPTKFRGA. Residues 188–211 traverse the membrane as a helical segment; that stretch reads IGALHQLAIVTGILVSQIIGLDFL. Position 193 (Q193) interacts with D-glucose. Residues 212–216 lie on the Extracellular side of the membrane; it reads LGNHE. The helical transmembrane segment at 217-239 threads the bilayer; that stretch reads LWHILLGLSAVPAVLQSLMLFFC. Over 240 to 303 the chain is Cytoplasmic; that stretch reads PESPRYLYIK…LFTNSSYRQP (64 aa). A helical transmembrane segment spans residues 304–327; the sequence is ILVALMLHMAQQFSGINGIFYYST. Residues 314-315 and N320 each bind D-glucose; that span reads QQ. The Extracellular segment spans residues 328 to 338; the sequence is SIFQTAGISQP. Residues 339 to 360 traverse the membrane as a helical segment; the sequence is VYATIGVGAINTIFTALSVFLV. N349 serves as a coordination point for D-glucose. Topologically, residues 361–366 are cytoplasmic; that stretch reads EKAGRR. A helical transmembrane segment spans residues 367–389; it reads SLFLIGMSGMFVCAIFMSVGLVL. Topologically, residues 390-394 are extracellular; that stretch reads LDKLP. Residues 395-413 traverse the membrane as a helical segment; the sequence is WMSYVSMTAIFLFVSFFEI. Residues E412 and W420 each contribute to the D-glucose site. Topologically, residues 414-433 are cytoplasmic; that stretch reads GPGPIPWFMVAEFFSQGPRP. A helical transmembrane segment spans residues 434 to 458; the sequence is AALAMAAFSNWTCNFIIALCFQYIA. The Extracellular segment spans residues 459–463; the sequence is DFCGP. A helical transmembrane segment spans residues 464–482; the sequence is YVFFLFAGVVLVFTLFTFF. Residues 483–524 lie on the Cytoplasmic side of the membrane; the sequence is KVPETKGKSFEEIAAEFQKKSGSAQSPKAAVEMEFLGATETV. The residue at position 523 (T523) is a Phosphothreonine.

This sequence belongs to the major facilitator superfamily. Sugar transporter (TC 2.A.1.1) family. Glucose transporter subfamily. In terms of processing, N-glycosylated; required for stability and retention at the cell surface of pancreatic beta cells.

It localises to the cell membrane. The enzyme catalyses D-glucose(out) = D-glucose(in). It catalyses the reaction D-fructose(out) = D-fructose(in). It carries out the reaction L-dehydroascorbate(out) = L-dehydroascorbate(in). The catalysed reaction is D-galactose(in) = D-galactose(out). Its activity is regulated as follows. D-glucose and maltose competitively inhibit fructose transport. D-glucose, D-fructose and maltose inhibit deoxyglucose transport. Facilitative hexose transporter that mediates the transport of glucose, fructose and galactose. Likely mediates the bidirectional transfer of glucose across the plasma membrane of hepatocytes and is responsible for uptake of glucose by the beta cells; may comprise part of the glucose-sensing mechanism of the beta cell. May also participate with the Na(+)/glucose cotransporter in the transcellular transport of glucose in the small intestine and kidney. Also able to mediate the transport of dehydroascorbate. This is Solute carrier family 2, facilitated glucose transporter member 2 from Sus scrofa (Pig).